Here is a 294-residue protein sequence, read N- to C-terminus: MDEIKKDDELSQWLSTYGTITAERILGRYNISLPQDEILEAINIPSSFYRHLLQIPLKNVLNGIVIQQASDYHVYAQKLLIDYLLSGESSKEPDSQGAGTRESLEDERQRLVQLGDEFHKLELEQDNLIASSQASLMKISIDWNTKLETTLSKLNSLYKNTNSKIKKNAIRKALIKAFIHCDLVKDQSQKNKYQLIDKLNQTLAVSVGAELKESILTNLSELFQILEALNTKLDEFTDRTNHLSQQAKSFRTQFYEVILRIIELIKLLPEYKIDPAQDAINREPLYFDRTIGER.

As to quaternary structure, the T4BSS is a complex nanomachine composed of several subcomplexes. This subunit is part of the Type IV Coupling Complex (T4CC), a subcomplex composed of the DotLMNYZ core and the IcmSW-LvgA adapter subunits, linked by the C-terminal tail of DotL. Six DotLMNYZ hetero-pentameric units may assemble into a hexameric nanomachine, forming an inner membrane channel for effectors to pass through. Makes significant contact with DotN and DotY, but engages weakly with DotM and DotL. DotY and DotZ are co-dependent for the assembly into the T4CC.

Its subcellular location is the cytoplasm. Functionally, component of the Dot/Icm type IVB secretion system (T4BSS), which is used to inject bacterial effector proteins into eukaryotic host cells. Part of a subcomplex which recruits effector proteins and delivers them to the core transmembrane subcomplex. DotY and DotZ play a role in effector translocation, but are not essential and do not influence the stability of the subcomplex main components. The DotY/DotZ main function is to optimize secretion by modulating the delivery trajectory of the IcmSW module and the localization of the machinery to the poles. The protein is Type 4 apparatus protein DotZ of Legionella pneumophila subsp. pneumophila (strain Philadelphia 1 / ATCC 33152 / DSM 7513).